A 748-amino-acid polypeptide reads, in one-letter code: Disintegrin and metalloproteinase domain-containing protein 10 (748 aa).

An N-terminal signal peptide occupies residues 1–19 (MVLLRVLILLLSWVAGLGG). Residues 20–213 (QYGNPLNKYI…NGPELLRKKR (194 aa)) constitute a propeptide that is removed on maturation. At 20 to 672 (QYGNPLNKYI…SPELYENIAE (653 aa)) the chain is on the extracellular side. The Cysteine switch signature appears at 171–178 (GGCADHSV). Residue cysteine 173 participates in Zn(2+) binding. Residues 220 to 456 (NTCQLYIQTD…KRNNCFVESG (237 aa)) form the Peptidase M12B domain. N-linked (GlcNAc...) asparagine glycans are attached at residues asparagine 267 and asparagine 278. 16 cysteine pairs are disulfide-bonded: cysteine 344–cysteine 451, cysteine 399–cysteine 435, cysteine 460–cysteine 495, cysteine 471–cysteine 484, cysteine 473–cysteine 479, cysteine 483–cysteine 515, cysteine 503–cysteine 511, cysteine 510–cysteine 536, cysteine 524–cysteine 543, cysteine 530–cysteine 562, cysteine 555–cysteine 567, cysteine 572–cysteine 598, cysteine 580–cysteine 607, cysteine 582–cysteine 597, cysteine 594–cysteine 639, and cysteine 632–cysteine 645. Histidine 383 serves as a coordination point for Zn(2+). Glutamate 384 is a catalytic residue. Residues histidine 387 and histidine 393 each coordinate Zn(2+). Residue asparagine 439 is glycosylated (N-linked (GlcNAc...) asparagine). The Disintegrin domain maps to 457-551 (QPICGNGMVE…LCPASDPKPN (95 aa)). Asparagine 551 carries N-linked (GlcNAc...) asparagine glycosylation. The helical transmembrane segment at 673 to 696 (WIVAYWWAVLLMGIALIMLMAGFI) threads the bilayer. The Cytoplasmic segment spans residues 697–748 (KICSVHTPSSNPKLPPPKPLPGTLKRRRPPQPIQQPQRQRPRESYQMGHMRR). The tract at residues 704–748 (PSSNPKLPPPKPLPGTLKRRRPPQPIQQPQRQRPRESYQMGHMRR) is disordered. Residues 708–715 (PKLPPPKP) carry the SH3-binding motif. Threonine 719 is subject to Phosphothreonine. The short motif at 722 to 728 (RRRPPQP) is the SH3-binding element. Positions 734–748 (RQRPRESYQMGHMRR) are interaction with AP2A1, AP2A2 and AP2M1.

In terms of assembly, forms a ternary EFNA5-EPHA3-ADAM10 complex mediating EFNA5 extracellular domain shedding by ADAM10 which regulates the EFNA5-EPHA3 complex internalization and function, the cleavage occurs in trans, with ADAM10 and its substrate being on the membranes of opposing cells. Interacts with the clathrin adapter AP2 complex subunits AP2A1, AP2A2, AP2B1, and AP2M1; this interaction facilitates ADAM10 endocytosis from the plasma membrane during long-term potentiation in hippocampal neurons. Forms a ternary complex composed of ADAM10, EPHA4 and CADH1; within the complex, ADAM10 cleaves CADH1 which disrupts adherens junctions. Interacts with EPHA2. Interacts with NGF in a divalent cation-dependent manner. Interacts with TSPAN14; the interaction promotes ADAM10 maturation and cell surface expression. Interacts with TSPAN5, TSPAN10, TSPAN14, TSPAN15, TSPAN17 and TSPAN33; these interactions regulate ADAM10 substrate specificity, endocytosis and turnover. Interacts (via extracellular domain) with TSPAN33 (via extracellular domain) and (via cytoplasmic domain) with AFDN; interaction with TSPAN33 allows the docking of ADAM10 to zonula adherens through a PDZ11-dependent interaction between TSPAN33 and PLEKHA7 while interaction with AFDN locks ADAM10 at zonula adherens. Interacts with DLG1; this interaction recruits ADAM10 to the cell membrane during long-term depression in hippocampal neurons. Interacts (via extracellular domain) with BACE1 (via extracellular domain). Interacts with FAM171A1. Zn(2+) serves as cofactor. The precursor is cleaved by furin and PCSK7. As to expression, expressed at low level in kidney, spleen, lung, adrenal, heart and peripheral nerve.

Its subcellular location is the golgi apparatus membrane. The protein localises to the cell membrane. The protein resides in the cytoplasmic vesicle. It localises to the clathrin-coated vesicle. It is found in the cell projection. Its subcellular location is the axon. The protein localises to the dendrite. The protein resides in the cell junction. It localises to the adherens junction. It is found in the cytoplasm. It carries out the reaction Endopeptidase of broad specificity.. Catalytically inactive when the propeptide is intact and associated with the mature enzyme. The disintegrin and cysteine-rich regions modulate access of substrates to exerts an inhibitory effect on the cleavage of ADAM10 substrates. Its function is as follows. Transmembrane metalloprotease which mediates the ectodomain shedding of a myriad of transmembrane proteins, including adhesion proteins, growth factor precursors and cytokines being essential for development and tissue homeostasis. Associates with six members of the tetraspanin superfamily TspanC8 which regulate its exit from the endoplasmic reticulum and its substrate selectivity. Cleaves the membrane-bound precursor of TNF-alpha at '76-Ala-|-Val-77' to its mature soluble form. Responsible for the proteolytical release of soluble JAM3 from endothelial cells surface. Responsible for the proteolytic release of several other cell-surface proteins, including heparin-binding epidermal growth-like factor, ephrin-A2, CD44, CDH2 and for constitutive and regulated alpha-secretase cleavage of amyloid precursor protein (APP). Contributes to the normal cleavage of the cellular prion protein. Involved in the cleavage of the adhesion molecule L1 at the cell surface and in released membrane vesicles, suggesting a vesicle-based protease activity. Also controls the proteolytic processing of Notch and mediates lateral inhibition during neurogenesis. Required for the development of type 1 transitional B cells into marginal zone B cells, probably by cleaving Notch. Responsible for the FasL ectodomain shedding and for the generation of the remnant ADAM10-processed FasL (FasL APL) transmembrane form. Also cleaves the ectodomain of the integral membrane proteins CORIN and ITM2B. Mediates the proteolytic cleavage of LAG3, leading to release the secreted form of LAG3. Mediates the proteolytic cleavage of IL6R and IL11RA, leading to the release of secreted forms of IL6R and IL11RA. Enhances the cleavage of CHL1 by BACE1. Cleaves NRCAM. Cleaves TREM2, resulting in shedding of the TREM2 ectodomain. Involved in the development and maturation of glomerular and coronary vasculature. During development of the cochlear organ of Corti, promotes pillar cell separation by forming a ternary complex with CADH1 and EPHA4 and cleaving CADH1 at adherens junctions. May regulate the EFNA5-EPHA3 signaling. Regulates leukocyte transmigration as a sheddase for the adherens junction protein VE-cadherin/CDH5 in endothelial cells. In Bos taurus (Bovine), this protein is Disintegrin and metalloproteinase domain-containing protein 10 (ADAM10).